Here is a 382-residue protein sequence, read N- to C-terminus: Glutamate 5-kinase (382 aa).

Lysine 15 is an ATP binding site. Substrate is bound by residues serine 62, aspartate 149, and asparagine 161. Position 181 to 182 (181 to 182 (TD)) interacts with ATP. The region spanning 288-366 (RGSVSVDAGA…VEIERLLGYS (79 aa)) is the PUA domain.

The protein belongs to the glutamate 5-kinase family.

The protein localises to the cytoplasm. It catalyses the reaction L-glutamate + ATP = L-glutamyl 5-phosphate + ADP. The protein operates within amino-acid biosynthesis; L-proline biosynthesis; L-glutamate 5-semialdehyde from L-glutamate: step 1/2. Its function is as follows. Catalyzes the transfer of a phosphate group to glutamate to form L-glutamate 5-phosphate. The sequence is that of Glutamate 5-kinase from Delftia acidovorans (strain DSM 14801 / SPH-1).